Consider the following 1256-residue polypeptide: N-acetylglucosamine-1-phosphotransferase subunits alpha/beta (1256 aa).

Residues 22 to 42 (VCFLGVVVTIVSAFQFGEVVL) form a helical membrane-spanning segment. N-linked (GlcNAc...) asparagine glycans are attached at residues Asn83, Asn114, Asn148, Asn179, and Asn250. 4 cysteine pairs are disulfide-bonded: Cys438–Cys461, Cys452–Cys468, Cys505–Cys528, and Cys519–Cys535. LNR repeat units lie at residues 438–473 (CAEG…GNSG) and 505–545 (CNQG…ELYK). The Ca(2+) site is built by Asp449, Asp464, Asp467, Asp516, Asp531, and Asp534. Residues Asn614, Asn699, Asn729, Asn829, and Asn1009 are each glycosylated (N-linked (GlcNAc...) asparagine). One can recognise a DMAP1-binding domain in the interval 699–798 (NISLLPKDAQ…TFPAVSVKVN (100 aa)). An EF-hand domain is found at 1005 to 1040 (VQPLNISQVFDEVDTDQSGVLSDREIRTLATRIHEL). Residues Asp1018, Asp1020, Ser1022, and Glu1029 each contribute to the Ca(2+) site. Residue Asn1129 is glycosylated (N-linked (GlcNAc...) asparagine). The chain crosses the membrane as a helical span at residues 1215-1235 (VLATLIMFTIFSFFAEQLIAL).

Belongs to the stealth family. Hexamer of two alpha, two beta and two gamma (GNPTG) subunits; disulfide-linked. The alpha and/or the beta subunits of the enzyme constitute the catalytic subunits. Interacts with LYSET; facilitates proper localization of GNPTAB. Post-translationally, the alpha- and beta-subunits are generated by a proteolytic cleavage by MBTPS1 protease at the Lys-928-Asp-929 bond. In terms of tissue distribution, expressed in the heart, whole brain, placenta, lung, liver, skeletal muscle, kidney and pancreas.

The protein localises to the golgi apparatus membrane. It catalyses the reaction N(4)-[alpha-D-mannosyl-(1-&gt;2)-alpha-D-mannosyl-(glycan)]-L-asparaginyl-[protein] + UDP-N-acetyl-alpha-D-glucosamine = N(4)-[6-(N-acetyl-alpha-D-glucosaminyl-1-phospho)-alpha-D-mannosyl-(1-&gt;2)-alpha-D-mannosyl-(glycan)]-L-asparaginyl-[protein] + UMP + H(+). Functionally, catalyzes the formation of mannose 6-phosphate (M6P) markers on high mannose type oligosaccharides in the Golgi apparatus. M6P residues are required to bind to the M6P receptors (MPR), which mediate the vesicular transport of lysosomal enzymes to the endosomal/prelysosomal compartment. The sequence is that of N-acetylglucosamine-1-phosphotransferase subunits alpha/beta (GNPTAB) from Homo sapiens (Human).